Here is a 147-residue protein sequence, read N- to C-terminus: MSENFHILLLNGPNLNLLGTREPETYGHLTLNDIVQSLSADAQALNVKLTHFQSNAEHELINKIHAARGNVDYILINPAAFTHTSVALRDALLGVNIPFIEIHLSNVYSREPFRHHSYLSDIATGVICGLGAEGYRFALQAAVNRLS.

The active-site Proton acceptor is Tyr-26. Residues Asn-77, His-83, and Asp-90 each coordinate substrate. The Proton donor role is filled by His-103. Substrate is bound by residues 104–105 (LS) and Arg-114.

Belongs to the type-II 3-dehydroquinase family. Homododecamer.

It catalyses the reaction 3-dehydroquinate = 3-dehydroshikimate + H2O. Its pathway is metabolic intermediate biosynthesis; chorismate biosynthesis; chorismate from D-erythrose 4-phosphate and phosphoenolpyruvate: step 3/7. In terms of biological role, catalyzes a trans-dehydration via an enolate intermediate. The polypeptide is 3-dehydroquinate dehydratase (Proteus mirabilis (strain HI4320)).